The following is a 963-amino-acid chain: Phosphoenolpyruvate carboxylase (963 aa).

Serine 11 bears the Phosphoserine mark. Residues histidine 172 and lysine 600 contribute to the active site.

It belongs to the PEPCase type 1 family. As to quaternary structure, homotetramer. Mg(2+) serves as cofactor.

It is found in the cytoplasm. The catalysed reaction is oxaloacetate + phosphate = phosphoenolpyruvate + hydrogencarbonate. Its activity is regulated as follows. By light-reversible phosphorylation. In terms of biological role, through the carboxylation of phosphoenolpyruvate (PEP) it forms oxaloacetate, a four-carbon dicarboxylic acid source for the tricarboxylic acid cycle. The protein is Phosphoenolpyruvate carboxylase (PPC) of Picea abies (Norway spruce).